The sequence spans 481 residues: Aspartyl/glutamyl-tRNA(Asn/Gln) amidotransferase subunit B (481 aa).

The protein belongs to the GatB/GatE family. GatB subfamily. Heterotrimer of A, B and C subunits.

The enzyme catalyses L-glutamyl-tRNA(Gln) + L-glutamine + ATP + H2O = L-glutaminyl-tRNA(Gln) + L-glutamate + ADP + phosphate + H(+). It catalyses the reaction L-aspartyl-tRNA(Asn) + L-glutamine + ATP + H2O = L-asparaginyl-tRNA(Asn) + L-glutamate + ADP + phosphate + 2 H(+). Its function is as follows. Allows the formation of correctly charged Asn-tRNA(Asn) or Gln-tRNA(Gln) through the transamidation of misacylated Asp-tRNA(Asn) or Glu-tRNA(Gln) in organisms which lack either or both of asparaginyl-tRNA or glutaminyl-tRNA synthetases. The reaction takes place in the presence of glutamine and ATP through an activated phospho-Asp-tRNA(Asn) or phospho-Glu-tRNA(Gln). The chain is Aspartyl/glutamyl-tRNA(Asn/Gln) amidotransferase subunit B from Cellvibrio japonicus (strain Ueda107) (Pseudomonas fluorescens subsp. cellulosa).